We begin with the raw amino-acid sequence, 258 residues long: Isoprenyl transferase (258 aa).

Asp38 is a catalytic residue. Position 38 (Asp38) interacts with Mg(2+). Residues 39 to 42 (GNGR), Trp43, Arg51, His55, and 83 to 85 (STE) each bind substrate. Asn86 acts as the Proton acceptor in catalysis. Substrate contacts are provided by residues Trp87, Arg89, Arg206, and 212–214 (RIS). Glu225 contacts Mg(2+).

The protein belongs to the UPP synthase family. Homodimer. Mg(2+) serves as cofactor.

In terms of biological role, catalyzes the condensation of isopentenyl diphosphate (IPP) with allylic pyrophosphates generating different type of terpenoids. This is Isoprenyl transferase from Bacillus anthracis.